We begin with the raw amino-acid sequence, 161 residues long: Epididymal protein 13 (161 aa).

The N-terminal stretch at 1 to 23 (MHRSEPFLKMSLLILLFLGLAEA) is a signal peptide. Residue N56 is glycosylated (N-linked (GlcNAc...) asparagine).

It localises to the secreted. In Homo sapiens (Human), this protein is Epididymal protein 13.